Here is a 47-residue protein sequence, read N- to C-terminus: Large ribosomal subunit protein bL34 (47 aa).

The protein belongs to the bacterial ribosomal protein bL34 family.

The polypeptide is Large ribosomal subunit protein bL34 (Rhodococcus opacus (strain B4)).